We begin with the raw amino-acid sequence, 631 residues long: PTS system glucosamine-specific EIICBA component (631 aa).

The region spanning 3-382 is the PTS EIIC type-1 domain; sequence KKAFQILQQL…WNLKTPGRET (380 aa). The next 8 membrane-spanning stretches (helical) occupy residues 12–32, 56–76, 106–126, 149–169, 196–216, 243–263, 298–318, and 350–370; these read LGRA…LLRF, LIFA…AGLA, HLID…AYLY, IITS…WPLI, LLIP…MMGE, FMMG…LAII, FLFV…VIFV, and VVIP…RFAI. Residues 397-478 enclose the PTS EIIB type-1 domain; the sequence is DQLAFHVLQA…KTIMAGGVPA (82 aa). The active-site Phosphocysteine intermediate; for EIIB activity is Cys419. Residue Cys419 is modified to Phosphocysteine. The 105-residue stretch at 515-619 folds into the PTS EIIA type-1 domain; the sequence is DQVFSEKMMG…SAITPVIFTN (105 aa). Residue His567 is the Tele-phosphohistidine intermediate; for EIIA activity of the active site. A Phosphohistidine modification is found at His567.

The protein resides in the cell membrane. It catalyses the reaction D-glucosamine(out) + N(pros)-phospho-L-histidyl-[protein] = D-glucosamine 6-phosphate(in) + L-histidyl-[protein]. Its function is as follows. The phosphoenolpyruvate-dependent sugar phosphotransferase system (sugar PTS), a major carbohydrate active transport system, catalyzes the phosphorylation of incoming sugar substrates concomitantly with their translocation across the cell membrane. This system is involved in glucosamine transport. In vitro, when expressed in the absence of GamR and NagP, can transport N-acetylglucosamine. In addition, plays an important role in the phosphorylation of EIIA-deficient PTS transporters. The EIIA domain can transfer a phosphoryl group to EIIA-deficient PTS transporters, enabling growth with maltose, N-acetylglucosamine, sucrose or trehalose as the sole carbon source. This is PTS system glucosamine-specific EIICBA component from Bacillus subtilis (strain 168).